A 160-amino-acid polypeptide reads, in one-letter code: SsrA-binding protein (160 aa).

It belongs to the SmpB family.

It is found in the cytoplasm. Functionally, required for rescue of stalled ribosomes mediated by trans-translation. Binds to transfer-messenger RNA (tmRNA), required for stable association of tmRNA with ribosomes. tmRNA and SmpB together mimic tRNA shape, replacing the anticodon stem-loop with SmpB. tmRNA is encoded by the ssrA gene; the 2 termini fold to resemble tRNA(Ala) and it encodes a 'tag peptide', a short internal open reading frame. During trans-translation Ala-aminoacylated tmRNA acts like a tRNA, entering the A-site of stalled ribosomes, displacing the stalled mRNA. The ribosome then switches to translate the ORF on the tmRNA; the nascent peptide is terminated with the 'tag peptide' encoded by the tmRNA and targeted for degradation. The ribosome is freed to recommence translation, which seems to be the essential function of trans-translation. In Sodalis glossinidius (strain morsitans), this protein is SsrA-binding protein.